The following is a 278-amino-acid chain: Large ribosomal subunit protein uL2 (278 aa).

The tract at residues 211–278 is disordered; it reads KRWLGKRPQS…LIIRRRKGSK (68 aa). The segment covering 258–270 has biased composition (basic and acidic residues); the sequence is KTRDTKKASEKLI.

The protein belongs to the universal ribosomal protein uL2 family. In terms of assembly, part of the 50S ribosomal subunit. Forms a bridge to the 30S subunit in the 70S ribosome.

In terms of biological role, one of the primary rRNA binding proteins. Required for association of the 30S and 50S subunits to form the 70S ribosome, for tRNA binding and peptide bond formation. It has been suggested to have peptidyltransferase activity; this is somewhat controversial. Makes several contacts with the 16S rRNA in the 70S ribosome. The chain is Large ribosomal subunit protein uL2 from Lactobacillus helveticus (strain DPC 4571).